A 155-amino-acid chain; its full sequence is DNA polymerase epsilon subunit 4 (155 aa).

Acidic residues-rich tracts occupy residues 1–16 (MASE…EEQD) and 24–48 (ETEE…DNPE). The segment at 1 to 76 (MASEELFEAE…APADNEAKMT (76 aa)) is disordered. Residues 49–65 (AESTTEQLTEKPVTNGN) show a composition bias toward polar residues.

In terms of assembly, component of the DNA polymerase epsilon complex consisting of four subunits: the catalytic subunit PolE1/DNApol-epsilon255 and the accessory subunits PolE2/DNApol-epsilon58, Chrac-14/DNApolE3 and PolE4/Mes4.

It is found in the nucleus. Its function is as follows. Accessory component of the DNA polymerase epsilon complex. Participates in DNA repair and in chromosomal DNA replication. Has a role in cell cycle progression. Required for wing morphogenesis. The chain is DNA polymerase epsilon subunit 4 from Drosophila melanogaster (Fruit fly).